A 668-amino-acid chain; its full sequence is BTB/POZ domain-containing protein At5g66560 (668 aa).

The region spanning Ser-21–Ala-133 is the BTB domain. Residues Glu-73–Glu-84 are compositionally biased toward basic and acidic residues. The disordered stretch occupies residues Glu-73–Glu-98. Residues Asp-85 to Glu-98 are compositionally biased toward acidic residues. Positions Glu-254–Gln-530 constitute an NPH3 domain. A Phosphotyrosine modification is found at Tyr-471.

This sequence belongs to the NPH3 family.

It participates in protein modification; protein ubiquitination. In terms of biological role, may act as a substrate-specific adapter of an E3 ubiquitin-protein ligase complex (CUL3-RBX1-BTB) which mediates the ubiquitination and subsequent proteasomal degradation of target proteins. In Arabidopsis thaliana (Mouse-ear cress), this protein is BTB/POZ domain-containing protein At5g66560.